Here is a 413-residue protein sequence, read N- to C-terminus: CinA-like protein (413 aa).

This sequence belongs to the CinA family.

This is CinA-like protein from Desulfotalea psychrophila (strain LSv54 / DSM 12343).